Consider the following 658-residue polypeptide: Endoplasmic reticulum mannosyl-oligosaccharide 1,2-alpha-mannosidase (658 aa).

Residues M1–N50 are Cytoplasmic-facing. A helical; Signal-anchor for type II membrane protein membrane pass occupies residues V51–A71. Residues D72–A658 lie on the Lumenal side of the membrane. A Phosphoserine modification is found at S102. The tract at residues G123–D142 is disordered. Residue E289 is the Proton donor of the active site. D422 is a catalytic residue. Residues C486 and C515 are joined by a disulfide bond. E529 (proton donor) is an active-site residue. The active site involves E558. Ca(2+) is bound at residue T647.

This sequence belongs to the glycosyl hydrolase 47 family. The cofactor is Ca(2+).

The protein localises to the endoplasmic reticulum membrane. It carries out the reaction N(4)-(alpha-D-Man-(1-&gt;2)-alpha-D-Man-(1-&gt;2)-alpha-D-Man-(1-&gt;3)-[alpha-D-Man-(1-&gt;2)-alpha-D-Man-(1-&gt;3)-[alpha-D-Man-(1-&gt;2)-alpha-D-Man-(1-&gt;6)]-alpha-D-Man-(1-&gt;6)]-beta-D-Man-(1-&gt;4)-beta-D-GlcNAc-(1-&gt;4)-beta-D-GlcNAc)-L-asparaginyl-[protein] (N-glucan mannose isomer 9A1,2,3B1,2,3) + 4 H2O = N(4)-(alpha-D-Man-(1-&gt;3)-[alpha-D-Man-(1-&gt;3)-[alpha-D-Man-(1-&gt;6)]-alpha-D-Man-(1-&gt;6)]-beta-D-Man-(1-&gt;4)-beta-D-GlcNAc-(1-&gt;4)-beta-D-GlcNAc)-L-asparaginyl-[protein] (N-glucan mannose isomer 5A1,2) + 4 beta-D-mannose. The catalysed reaction is N(4)-(alpha-D-Man-(1-&gt;2)-alpha-D-Man-(1-&gt;2)-alpha-D-Man-(1-&gt;3)-[alpha-D-Man-(1-&gt;3)-[alpha-D-Man-(1-&gt;2)-alpha-D-Man-(1-&gt;6)]-alpha-D-Man-(1-&gt;6)]-beta-D-Man-(1-&gt;4)-beta-D-GlcNAc-(1-&gt;4)-beta-D-GlcNAc)-L-asparaginyl-[protein] (N-glucan mannose isomer 8A1,2,3B1,3) + 3 H2O = N(4)-(alpha-D-Man-(1-&gt;3)-[alpha-D-Man-(1-&gt;3)-[alpha-D-Man-(1-&gt;6)]-alpha-D-Man-(1-&gt;6)]-beta-D-Man-(1-&gt;4)-beta-D-GlcNAc-(1-&gt;4)-beta-D-GlcNAc)-L-asparaginyl-[protein] (N-glucan mannose isomer 5A1,2) + 3 beta-D-mannose. The protein operates within protein modification; protein glycosylation. Its function is as follows. Involved in glycoprotein quality control targeting of misfolded glycoproteins for degradation. It primarily trims a single alpha-1,2-linked mannose residue from Man(9)GlcNAc(2) to produce Man(8)GlcNAc(2), but at high enzyme concentrations, as found in the ER quality control compartment (ERQC), it further trims the carbohydrates to Man(5-6)GlcNAc(2). The polypeptide is Endoplasmic reticulum mannosyl-oligosaccharide 1,2-alpha-mannosidase (Man1b1) (Mus musculus (Mouse)).